The following is a 492-amino-acid chain: N-succinylglutamate 5-semialdehyde dehydrogenase (492 aa).

220–225 (GSANTG) serves as a coordination point for NAD(+). Catalysis depends on residues glutamate 243 and cysteine 277.

This sequence belongs to the aldehyde dehydrogenase family. AstD subfamily.

The catalysed reaction is N-succinyl-L-glutamate 5-semialdehyde + NAD(+) + H2O = N-succinyl-L-glutamate + NADH + 2 H(+). Its pathway is amino-acid degradation; L-arginine degradation via AST pathway; L-glutamate and succinate from L-arginine: step 4/5. Catalyzes the NAD-dependent reduction of succinylglutamate semialdehyde into succinylglutamate. The sequence is that of N-succinylglutamate 5-semialdehyde dehydrogenase from Escherichia coli O157:H7.